The following is a 406-amino-acid chain: Corticosteroid-binding globulin (406 aa).

The N-terminal stretch at 1–22 is a signal peptide; that stretch reads MPLLLYTCLLWLLSSGLWTVQA. 2 N-linked (GlcNAc...) asparagine glycosylation sites follow: Asn31 and Asn96. Gln255 contacts cortisol. N-linked (GlcNAc...) asparagine glycosylation occurs at Asn261. A cortisol-binding site is contributed by Asp287. Residues Asn331 and Asn360 are each glycosylated (N-linked (GlcNAc...) asparagine). Trp394 serves as a coordination point for cortisol.

This sequence belongs to the serpin family. As to expression, expressed by the liver; secreted in plasma.

The protein localises to the secreted. In terms of biological role, major transport protein for glucocorticoids and progestins in the blood of almost all vertebrate species. This is Corticosteroid-binding globulin (SERPINA6) from Saimiri sciureus (Common squirrel monkey).